A 250-amino-acid chain; its full sequence is Hydroxyethylthiazole kinase (250 aa).

Met39 contributes to the substrate binding site. Residues Arg114 and Thr159 each contribute to the ATP site. Residue Gly186 participates in substrate binding.

It belongs to the Thz kinase family. It depends on Mg(2+) as a cofactor.

The catalysed reaction is 5-(2-hydroxyethyl)-4-methylthiazole + ATP = 4-methyl-5-(2-phosphooxyethyl)-thiazole + ADP + H(+). The protein operates within cofactor biosynthesis; thiamine diphosphate biosynthesis; 4-methyl-5-(2-phosphoethyl)-thiazole from 5-(2-hydroxyethyl)-4-methylthiazole: step 1/1. In terms of biological role, catalyzes the phosphorylation of the hydroxyl group of 4-methyl-5-beta-hydroxyethylthiazole (THZ). This Lactococcus lactis subsp. cremoris (strain SK11) protein is Hydroxyethylthiazole kinase.